Reading from the N-terminus, the 37-residue chain is Large ribosomal subunit protein bL36 (37 aa).

Belongs to the bacterial ribosomal protein bL36 family.

The polypeptide is Large ribosomal subunit protein bL36 (Chromobacterium violaceum (strain ATCC 12472 / DSM 30191 / JCM 1249 / CCUG 213 / NBRC 12614 / NCIMB 9131 / NCTC 9757 / MK)).